The chain runs to 769 residues: Sensor protein DivL (769 aa).

A helical membrane pass occupies residues 6–26 (LILAAAAGAVCLAISVALWSH). Positions 547-758 (NVSYELRTPL…TFTCHLPETQ (212 aa)) constitute a Histidine kinase domain. A Phosphotyrosine; by autocatalysis modification is found at Y550.

In terms of processing, autophosphorylated.

Its subcellular location is the cell membrane. It catalyses the reaction ATP + protein L-histidine = ADP + protein N-phospho-L-histidine.. Required for cell division and growth. It catalyzes the phosphorylation of CtrA and activates transcription in vitro of the cell cycle-regulated fliF promoter. The sequence is that of Sensor protein DivL (divL) from Caulobacter vibrioides (strain ATCC 19089 / CIP 103742 / CB 15) (Caulobacter crescentus).